The sequence spans 67 residues: Toxin Bl-1 (67 aa).

The 65-residue stretch at 2-66 (RDGYISQPEN…GIIVDGIKCH (65 aa)) folds into the LCN-type CS-alpha/beta domain. 4 disulfides stabilise this stretch: cysteine 12–cysteine 65, cysteine 16–cysteine 37, cysteine 23–cysteine 47, and cysteine 27–cysteine 49. The residue at position 67 (threonine 67) is a Threonine amide.

The protein belongs to the long (4 C-C) scorpion toxin superfamily. Sodium channel inhibitor family. Alpha subfamily. As to expression, expressed by the venom gland.

Its subcellular location is the secreted. Functionally, alpha toxins bind voltage-independently at site-3 of sodium channels (Nav) and inhibit the inactivation of the activated channels, thereby blocking neuronal transmission. Is highly toxic to insects (tested on the crickets A.domesticus). This peptide may also be toxic to mammals, since it is similar to alpha-like toxins that are active on both insect and mammalian sodium channels. The protein is Toxin Bl-1 of Buthacus leptochelys (Egyptian fat-tailed scorpion).